The following is a 63-amino-acid chain: MPTFKIKPKTGLLIRDPETFELLSESGEDKPKISYWLNHLKNGDVELVTETTTKAKNSNKEQA.

To phage Mu protein gp38.

This Haemophilus influenzae (strain ATCC 51907 / DSM 11121 / KW20 / Rd) protein is Mu-like prophage FluMu protein gp38.